The primary structure comprises 95 residues: Co-chaperonin GroES (95 aa).

The protein belongs to the GroES chaperonin family. In terms of assembly, heptamer of 7 subunits arranged in a ring. Interacts with the chaperonin GroEL.

Its subcellular location is the cytoplasm. Its function is as follows. Together with the chaperonin GroEL, plays an essential role in assisting protein folding. The GroEL-GroES system forms a nano-cage that allows encapsulation of the non-native substrate proteins and provides a physical environment optimized to promote and accelerate protein folding. GroES binds to the apical surface of the GroEL ring, thereby capping the opening of the GroEL channel. The polypeptide is Co-chaperonin GroES (Bordetella petrii (strain ATCC BAA-461 / DSM 12804 / CCUG 43448)).